Consider the following 132-residue polypeptide: Small ribosomal subunit protein uS8 (132 aa).

It belongs to the universal ribosomal protein uS8 family. In terms of assembly, part of the 30S ribosomal subunit. Contacts proteins S5 and S12.

One of the primary rRNA binding proteins, it binds directly to 16S rRNA central domain where it helps coordinate assembly of the platform of the 30S subunit. The protein is Small ribosomal subunit protein uS8 of Treponema pallidum (strain Nichols).